Reading from the N-terminus, the 201-residue chain is Large ribosomal subunit protein uL4 (201 aa).

The segment at 44–68 is disordered; sequence RAQKSRAEVSGSGRKPWRQKGTGRA.

The protein belongs to the universal ribosomal protein uL4 family. As to quaternary structure, part of the 50S ribosomal subunit.

In terms of biological role, one of the primary rRNA binding proteins, this protein initially binds near the 5'-end of the 23S rRNA. It is important during the early stages of 50S assembly. It makes multiple contacts with different domains of the 23S rRNA in the assembled 50S subunit and ribosome. Forms part of the polypeptide exit tunnel. This is Large ribosomal subunit protein uL4 from Buchnera aphidicola subsp. Acyrthosiphon pisum (strain 5A).